Consider the following 359-residue polypeptide: MPGHLLQEEMTPSYTTTTTITAPPSGSLQNGREKVKTVPLYLEEDIRPEMKEDIYDPTYQDEEGPPPKLEYVWRNIILMALLHVGALYGITLVPSCKLYTCLFAFVYYVISIEGIGAGVHRLWSHRTYKARLPLRIFLIIANTMAFQNDVYEWARDHRAHHKFSETHADPHNSRRGFFFSHVGWLLVRKHPAVKEKGGKLDMSDLKAEKLVMFQRRYYKPGILLMCFILPTLVPWYCWGETFLNSFYVATLLRYAVVLNATWLVNSAAHLYGYRPYDKNIDPRQNALVSLGSMGEGFHNYHHAFPYDYSASEYRWHINFTTFFIDCMAALGLAYDRKRVSKATVLARIKRTGDGSHKSG.

The segment at 1–34 (MPGHLLQEEMTPSYTTTTTITAPPSGSLQNGREK) is disordered. At 1–72 (MPGHLLQEEM…EGPPPKLEYV (72 aa)) the chain is on the cytoplasmic side. The segment covering 11-27 (TPSYTTTTTITAPPSGS) has biased composition (low complexity). Residues 73–93 (WRNIILMALLHVGALYGITLV) traverse the membrane as a helical segment. Position 75 (Asn75) interacts with substrate. Residues 94–97 (PSCK) lie on the Lumenal side of the membrane. A helical transmembrane segment spans residues 98–118 (LYTCLFAFVYYVISIEGIGAG). Over 119 to 217 (VHRLWSHRTY…EKLVMFQRRY (99 aa)) the chain is Cytoplasmic. Residues His120 and His125 each contribute to the Fe cation site. The short motif at 120-125 (HRLWSH) is the Histidine box-1 element. Substrate contacts are provided by Asn148, Arg155, and Asp156. 3 residues coordinate Fe cation: His157, His160, and His161. The Histidine box-2 motif lies at 157–161 (HRAHH). Substrate-binding residues include Arg188 and Lys189. Ser203 bears the Phosphoserine mark. The chain crosses the membrane as a helical span at residues 218-237 (YKPGILLMCFILPTLVPWYC). Topologically, residues 238-241 (WGET) are lumenal. A helical transmembrane segment spans residues 242-263 (FLNSFYVATLLRYAVVLNATWL). Trp262 serves as a coordination point for substrate. Over 264 to 359 (VNSAAHLYGY…RTGDGSHKSG (96 aa)) the chain is Cytoplasmic. The Fe cation site is built by His269, His298, His301, and His302. A Histidine box-3 motif is present at residues 298–302 (HNYHH).

It belongs to the fatty acid desaturase type 1 family. Requires Fe(2+) as cofactor. Detected in skin, but at lower levels compared to Scd1. Detected in the middlle part of the sebaceous gland, but not in hair follicle. Not detected in liver and brain.

It localises to the endoplasmic reticulum membrane. The protein localises to the microsome membrane. The enzyme catalyses hexadecanoyl-CoA + 2 Fe(II)-[cytochrome b5] + O2 + 2 H(+) = (9Z)-hexadecenoyl-CoA + 2 Fe(III)-[cytochrome b5] + 2 H2O. In terms of biological role, stearoyl-CoA desaturase that utilizes O(2) and electrons from reduced cytochrome b5 to introduce the first double bond into saturated fatty acyl-CoA substrates. Catalyzes the insertion of a cis double bond at the delta-9 position into fatty acyl-CoA substrates including palmitoyl-CoA. Has a strong preference for saturated fatty acids with chain lengths of 14 or 16 carbon atoms (C14:0 and C16:0), and has only very low activity with stearatate (C18:0). Required for the biosynthesis of membrane phospholipids, cholesterol esters and triglycerides. The sequence is that of Acyl-CoA desaturase 3 from Mus musculus (Mouse).